A 133-amino-acid chain; its full sequence is ATP synthase epsilon chain, chloroplastic (133 aa).

Belongs to the ATPase epsilon chain family. As to quaternary structure, F-type ATPases have 2 components, CF(1) - the catalytic core - and CF(0) - the membrane proton channel. CF(1) has five subunits: alpha(3), beta(3), gamma(1), delta(1), epsilon(1). CF(0) has three main subunits: a, b and c.

It localises to the plastid. The protein localises to the chloroplast thylakoid membrane. Produces ATP from ADP in the presence of a proton gradient across the membrane. The sequence is that of ATP synthase epsilon chain, chloroplastic from Helianthus annuus (Common sunflower).